A 479-amino-acid chain; its full sequence is Adenylate kinase 8 (479 aa).

Adenylate kinase stretches follow at residues 58-258 (PRVV…TYVQ) and 269-471 (PKVL…SGII). 67–72 (ASGKTT) is an ATP binding site. Residues 87–113 (TKENLLEREFSLLSLEAKKHYQVYKRV) are NMP 1. Residues 140–143 (GIPE), glutamine 147, and arginine 203 each bind AMP. The interval 177–206 (GKRIDPVTGEIYHTTFDWPPELEIQNRLIQ) is LID 1. 278–283 (GCGKKL) is an ATP binding site. Residues 298-327 (SCGQLLKEAMAAESSLGDLIEPFFEKRMTV) form an NMP 2 region. Residues 325 to 327 (MTV), 354 to 357 (GFPR), and glutamine 361 contribute to the AMP site. The interval 391–424 (LRRTDPVTGERFHLMYKPPPTIEVQARLLQNPKD) is LID 2. Arginine 392 is a binding site for ATP.

Belongs to the adenylate kinase family. Interacts with CFAP45 and CFAP52; CFAP45 and AK8 dimerization may create a cavity at the interface of the dimer that can accommodate AMP.

It localises to the cytoplasm. Its subcellular location is the cytosol. The protein localises to the cytoskeleton. It is found in the cilium axoneme. It carries out the reaction AMP + ATP = 2 ADP. It catalyses the reaction a 2'-deoxyribonucleoside 5'-diphosphate + ATP = a 2'-deoxyribonucleoside 5'-triphosphate + ADP. The enzyme catalyses a ribonucleoside 5'-diphosphate + ATP = a ribonucleoside 5'-triphosphate + ADP. Its function is as follows. Nucleoside monophosphate (NMP) kinase that catalyzes the reversible transfer of the terminal phosphate group between nucleoside triphosphates and monophosphates. Has highest activity toward AMP, and weaker activity toward dAMP, CMP and dCMP. Also displays broad nucleoside diphosphate kinase activity. In Rattus norvegicus (Rat), this protein is Adenylate kinase 8 (Ak8).